A 538-amino-acid chain; its full sequence is Dihomomethionine N-hydroxylase (538 aa).

Residues 8-28 (LPYPFHILLVFILSMASITLL) traverse the membrane as a helical segment.

This sequence belongs to the cytochrome P450 family. Heme serves as cofactor. As to expression, highly expressed in cotyledons, leaves, stems and siliques. Detected in flowers and lateral roots, but not in the main root. Expressed only in the vascular bundles in apical plant parts.

It localises to the endoplasmic reticulum membrane. It catalyses the reaction an L-polyhomomethionine + 2 reduced [NADPH--hemoprotein reductase] + 2 O2 = an (E)-omega-(methylsulfanyl)-alkanal oxime + 2 oxidized [NADPH--hemoprotein reductase] + CO2 + 3 H2O + 2 H(+). The enzyme catalyses L-dihomomethionine + 2 reduced [NADPH--hemoprotein reductase] + 2 O2 = (E)-5-(methylsulfanyl)pentanal oxime + 2 oxidized [NADPH--hemoprotein reductase] + CO2 + 3 H2O + 2 H(+). The catalysed reaction is L-trihomomethionine + 2 reduced [NADPH--hemoprotein reductase] + 2 O2 = (E)-6-(methylsulfanyl)hexanal oxime + 2 oxidized [NADPH--hemoprotein reductase] + CO2 + 3 H2O + 2 H(+). In terms of biological role, catalyzes the conversion of the short chain elongated methionines di-, tri-, and tetrahomomethionine to their respective aldoximes 5-methylthiopentanaldoxime, 6-methylthiohexanaldoxime, and 7-methylheptanaldoxime. This chain is Dihomomethionine N-hydroxylase (CYP79F1), found in Arabidopsis thaliana (Mouse-ear cress).